Here is a 220-residue protein sequence, read N- to C-terminus: Polyadenylate-binding protein 2 (220 aa).

Positions 1 to 24 (MEEEEHEVYGGEIPDVGEMDGDME) are disordered. The stretch at 34 to 74 (AADDDAVKELDEMKKRLKEMEDEAAALREMQAKVEKEMGAQ) forms a coiled coil. Residues 78 to 219 (SIAANQAGKE…FRRPMRYMPY (142 aa)) form a necessary for homooligomerization region. Residues 92–168 (RSVFVGNVDY…RQLKVLQKRT (77 aa)) enclose the RRM domain. Positions 165 to 172 (QKRTNVPG) match the Nuclear localization signal motif.

In terms of assembly, monomer and homooligomer. Binds RNA as a monomer and oligomerizes when bound to poly(A). Forms a complex with cleavage and polyadenylation specificity factor (CPSF) subunits PAPS2, FIPS5, PABN3 and PABN1. Interacts with CSP3.

It is found in the nucleus speckle. The protein resides in the cytoplasm. In terms of biological role, involved in the 3'-end formation of mRNA precursors (pre-mRNA) by the addition of a poly(A) tail of 200-250 nt to the upstream cleavage product. Stimulates poly(A) polymerase (PAPOLA) conferring processivity on the poly(A) tail elongation reaction and also controls the poly(A) tail length. Increases the affinity of poly(A) polymerase for RNA. Binds to poly(A) and to poly(G) with high affinity. May protect the poly(A) tail from degradation. This Arabidopsis thaliana (Mouse-ear cress) protein is Polyadenylate-binding protein 2.